We begin with the raw amino-acid sequence, 87 residues long: MARVTVEDCLEHVDNRFELVMLSTKRARQLATGGKEPRVAWENDKPTVVALREIAEGIVTNEFIAAEEIVTEDPVFAAFEDENNEAV.

The protein belongs to the RNA polymerase subunit omega family. As to quaternary structure, the RNAP catalytic core consists of 2 alpha, 1 beta, 1 beta' and 1 omega subunit. When a sigma factor is associated with the core the holoenzyme is formed, which can initiate transcription.

It carries out the reaction RNA(n) + a ribonucleoside 5'-triphosphate = RNA(n+1) + diphosphate. Functionally, promotes RNA polymerase assembly. Latches the N- and C-terminal regions of the beta' subunit thereby facilitating its interaction with the beta and alpha subunits. The polypeptide is DNA-directed RNA polymerase subunit omega (Pseudomonas putida (strain ATCC 700007 / DSM 6899 / JCM 31910 / BCRC 17059 / LMG 24140 / F1)).